Reading from the N-terminus, the 80-residue chain is Clavaspirin (80 aa).

Positions 1–17 (MKTIILILLILGLGIDA) are cleaved as a signal peptide. A propeptide spanning residues 18–29 (KSLEESKADEEK) is cleaved from the precursor. Position 52 is a leucine amide (leucine 52). Residues 53–80 (GDDQQDNGKFYGYYAEDNGKHWYDTGDQ) constitute a propeptide that is removed on maturation.

In terms of tissue distribution, pharyngeal tissues and hemocytes.

The protein localises to the secreted. Its function is as follows. Exhibits broad-spectrum antimicrobial activity against both Gram-positive and Gram-negative bacteria. Has potent hemolytic activity. The chain is Clavaspirin from Styela clava (Sea squirt).